The primary structure comprises 422 residues: Isocitrate dehydrogenase [NADP] (422 aa).

Position 94 (T94) interacts with NADP(+). D-threo-isocitrate-binding residues include S103, N105, R109, R119, and R143. Mg(2+) is bound at residue D310. NADP(+) contacts are provided by residues 344–350 (HGTAPKY), N357, Y396, and R400.

The protein belongs to the isocitrate and isopropylmalate dehydrogenases family. In terms of assembly, homodimer. Mg(2+) is required as a cofactor. It depends on Mn(2+) as a cofactor.

It carries out the reaction D-threo-isocitrate + NADP(+) = 2-oxoglutarate + CO2 + NADPH. Its function is as follows. Catalyzes the oxidative decarboxylation of isocitrate to 2-oxoglutarate and carbon dioxide with the concomitant reduction of NADP(+). The chain is Isocitrate dehydrogenase [NADP] (icd) from Staphylococcus epidermidis (strain ATCC 35984 / DSM 28319 / BCRC 17069 / CCUG 31568 / BM 3577 / RP62A).